Here is a 358-residue protein sequence, read N- to C-terminus: tRNA (guanine(26)-N(2))-dimethyltransferase (358 aa).

One can recognise a Trm1 methyltransferase domain in the interval 5–354; the sequence is VIRREGKAVF…ATYGEVERVL (350 aa). S-adenosyl-L-methionine is bound by residues Arg-39, Arg-69, Asp-87, Asp-113, and Ala-114.

This sequence belongs to the class I-like SAM-binding methyltransferase superfamily. Trm1 family.

The catalysed reaction is guanosine(26) in tRNA + 2 S-adenosyl-L-methionine = N(2)-dimethylguanosine(26) in tRNA + 2 S-adenosyl-L-homocysteine + 2 H(+). Dimethylates a single guanine residue at position 26 of a number of tRNAs using S-adenosyl-L-methionine as donor of the methyl groups. The chain is tRNA (guanine(26)-N(2))-dimethyltransferase from Pyrobaculum calidifontis (strain DSM 21063 / JCM 11548 / VA1).